A 363-amino-acid chain; its full sequence is DNA replication and repair protein RecF (363 aa).

Residue 30 to 37 coordinates ATP; sequence GDNAQGKT.

This sequence belongs to the RecF family.

It is found in the cytoplasm. Its function is as follows. The RecF protein is involved in DNA metabolism; it is required for DNA replication and normal SOS inducibility. RecF binds preferentially to single-stranded, linear DNA. It also seems to bind ATP. The polypeptide is DNA replication and repair protein RecF (Lachnospira eligens (strain ATCC 27750 / DSM 3376 / VPI C15-48 / C15-B4) (Eubacterium eligens)).